A 40-amino-acid chain; its full sequence is Cytochrome b6-f complex subunit 5 (40 aa).

The chain crosses the membrane as a helical span at residues Ile5–Ala25.

This sequence belongs to the PetG family. The 4 large subunits of the cytochrome b6-f complex are cytochrome b6, subunit IV (17 kDa polypeptide, PetD), cytochrome f and the Rieske protein, while the 4 small subunits are PetG, PetL, PetM and PetN. The complex functions as a dimer.

It is found in the cell inner membrane. Its function is as follows. Component of the cytochrome b6-f complex, which mediates electron transfer between photosystem II (PSII) and photosystem I (PSI), cyclic electron flow around PSI, and state transitions. PetG is required for either the stability or assembly of the cytochrome b6-f complex. This is Cytochrome b6-f complex subunit 5 from Gloeobacter violaceus (strain ATCC 29082 / PCC 7421).